The following is a 136-amino-acid chain: uncharacterized protein (136 aa).

This is an uncharacterized protein from Bacillus subtilis (strain 168).